The primary structure comprises 714 residues: Mitochondrial division protein 1 (714 aa).

Positions 240-298 (LNIQKNSTLSEIRDIEVEVENLRQKKEKLLGKIANIEQNQLLLEDNLKQIDDRLDFLEE) form a coiled coil. The interval 323-354 (LKNDAIRNEGVTTESISSEASNLPPRRRQQLR) is disordered. The span at 332–343 (GVTTESISSEAS) shows a compositional bias: polar residues. S376 is subject to Phosphoserine. WD repeat units lie at residues 396 to 436 (THDD…KIGE), 439 to 478 (GHLA…QLYQ), 500 to 539 (AHTD…QTID), 561 to 603 (TQRN…RTLK), 604 to 642 (GHTD…NKFH), 644 to 681 (YSAP…SWSC), and 685 to 714 (GNET…IWAV).

This sequence belongs to the WD repeat MDV1/CAF4 family. In terms of assembly, interacts with CAF4, DNM1 and FIS1, components of the mitochondrial fission machinery. Interacts via its N-terminal, coiled-coil extension (NTE) with FIS1, and via its WD repeats with DNM1.

The protein resides in the mitochondrion outer membrane. Functionally, involved in mitochondrial fission. Has a partially redundant function to CAF4 in acting as an adapter protein, binding to FIS1 on the mitochondrial outer membrane and recruiting the dynamin-like GTPase DNM1 to form mitochondrial fission complexes. Formation of these complexes is required to promote constriction and fission of the mitochondrial compartment at a late step in mitochondrial division. The polypeptide is Mitochondrial division protein 1 (MDV1) (Saccharomyces cerevisiae (strain YJM789) (Baker's yeast)).